The chain runs to 618 residues: Leucine aminopeptidase 2 (618 aa).

A peptide-binding positions include 139-141 (QCQ) and 271-276 (PYGGME). His-300 is a binding site for Zn(2+). The active-site Proton acceptor is the Glu-301. Positions 304 and 323 each coordinate Zn(2+). The Proton donor role is filled by Tyr-389.

It belongs to the peptidase M1 family. The cofactor is Zn(2+).

The protein localises to the cytoplasm. The protein resides in the nucleus. The catalysed reaction is an epoxide + H2O = an ethanediol. Functionally, aminopeptidase that preferentially cleaves di- and tripeptides. Also has low epoxide hydrolase activity (in vitro). Can hydrolyze the epoxide leukotriene LTA(4) but it forms preferentially 5,6-dihydroxy-7,9,11,14-eicosatetraenoic acid rather than the cytokine leukotriene B(4) as the product compared to the homologous mammalian enzyme (in vitro). This Aspergillus clavatus (strain ATCC 1007 / CBS 513.65 / DSM 816 / NCTC 3887 / NRRL 1 / QM 1276 / 107) protein is Leucine aminopeptidase 2.